The following is a 347-amino-acid chain: Phosphate acyltransferase (347 aa).

The protein belongs to the PlsX family. As to quaternary structure, homodimer. Probably interacts with PlsY.

The protein localises to the cytoplasm. It catalyses the reaction a fatty acyl-[ACP] + phosphate = an acyl phosphate + holo-[ACP]. It functions in the pathway lipid metabolism; phospholipid metabolism. Catalyzes the reversible formation of acyl-phosphate (acyl-PO(4)) from acyl-[acyl-carrier-protein] (acyl-ACP). This enzyme utilizes acyl-ACP as fatty acyl donor, but not acyl-CoA. The chain is Phosphate acyltransferase from Sinorhizobium fredii (strain NBRC 101917 / NGR234).